The following is a 259-amino-acid chain: MAVGKNKKLMKGKKGGKKKVVDVFTKKEWYDVKAPSYFKKRQVGKTPVNRTAGTKLSADGLRGRVYEMSLADLNDDESTFRKVKLQVEEIQGTECLTNFHGMSLTTDKLRSLVKKWRSLIEAFVDVKTNDGYVLRIFSIGFTKKQANSDRKTCYAQSAQKRALRAKMVEIMQREATCDLKEFVSKLMPGTIGQEIQKKCQSIFPLQDVYIRKVKVLKKPRFDVSKLLELHGEAGGVTADKGKTVAKSGEFVEPKPQTSV.

It belongs to the eukaryotic ribosomal protein eS1 family. Component of the small ribosomal subunit. Mature ribosomes consist of a small (40S) and a large (60S) subunit. The 40S subunit contains about 33 different proteins and 1 molecule of RNA (18S). The 60S subunit contains about 49 different proteins and 3 molecules of RNA (25S, 5.8S and 5S).

It localises to the cytoplasm. The chain is Small ribosomal subunit protein eS1 from Monosiga brevicollis (Choanoflagellate).